Reading from the N-terminus, the 791-residue chain is RAS guanyl-releasing protein 1 (791 aa).

The N-terminal Ras-GEF domain occupies leucine 49 to serine 172. The segment at serine 53–tyrosine 106 is ras exchanger motif region; required for transforming activity. Residues glutamate 201–arginine 432 enclose the Ras-GEF domain. 2 EF-hand domains span residues histidine 466–serine 501 and phenylalanine 502–isoleucine 528. Positions 479, 481, 483, 485, 490, 506, 508, 510, and 517 each coordinate Ca(2+). The Phorbol-ester/DAG-type zinc finger occupies leucine 537–cysteine 587. A compositionally biased stretch (polar residues) spans glutamine 683–leucine 695. The disordered stretch occupies residues glutamine 683 to arginine 715. Residues serine 702 to valine 712 show a composition bias toward pro residues. Residues isoleucine 728–aspartate 785 are a coiled coil.

It belongs to the RASGRP family.

It localises to the cytoplasm. The protein localises to the cytosol. The protein resides in the cell membrane. Its subcellular location is the golgi apparatus membrane. It is found in the endoplasmic reticulum membrane. Its activity is regulated as follows. Regulated by F-actin polymerization and probably by calcium. Functionally, functions as a diacylglycerol (DAG)-regulated nucleotide exchange factor specifically activating Ras through the exchange of bound GDP for GTP. The protein is RAS guanyl-releasing protein 1 (rasgrp1) of Xenopus tropicalis (Western clawed frog).